Here is a 152-residue protein sequence, read N- to C-terminus: MHCPFCNAADSKVIDSRLAAEGCQIRRRRECVSCGERFTTFESYEVVMPRVIKSNGKNEPFDEAKLRRSLMHALQKRPVTQEQIETVLSDIQLQIRRLGERDVKSRTIGEIVMQSLFALDHVAYVRFASVYQDFQDVEAFRRQIEQMQQREH.

The segment at 3-34 (CPFCNAADSKVIDSRLAAEGCQIRRRRECVSC) is a zinc-finger region. The 91-residue stretch at 49–139 (PRVIKSNGKN…VYQDFQDVEA (91 aa)) folds into the ATP-cone domain.

It belongs to the NrdR family. Zn(2+) is required as a cofactor.

In terms of biological role, negatively regulates transcription of bacterial ribonucleotide reductase nrd genes and operons by binding to NrdR-boxes. The chain is Transcriptional repressor NrdR from Acinetobacter baumannii (strain AB0057).